The primary structure comprises 89 residues: Small ribosomal subunit protein uS15 (89 aa).

The protein belongs to the universal ribosomal protein uS15 family. In terms of assembly, part of the 30S ribosomal subunit. Forms a bridge to the 50S subunit in the 70S ribosome, contacting the 23S rRNA.

One of the primary rRNA binding proteins, it binds directly to 16S rRNA where it helps nucleate assembly of the platform of the 30S subunit by binding and bridging several RNA helices of the 16S rRNA. Its function is as follows. Forms an intersubunit bridge (bridge B4) with the 23S rRNA of the 50S subunit in the ribosome. This is Small ribosomal subunit protein uS15 from Marinobacter nauticus (strain ATCC 700491 / DSM 11845 / VT8) (Marinobacter aquaeolei).